A 329-amino-acid chain; its full sequence is MNMESVLHNFATVLIYVEFIFGNLSNGFIVLSNFLDWVIKQKLSLIDKILLTLAISRITLIWEIYAWFKSLYDPSSFLIGIEFQIIYFSWVLSSHFSLWLATTLSVFYLLRIANCSWQIFLYLKWRLKQLIVGMLLGSLVFLLGNLMQSMLEERFYQYGRNTSVNTMSNDLAMWTELIFFNMAMFSVIPFTLALISFLLLIFSLWKHLQKMQLISRRHRDPSTKAHMNALRIMVSFLLLYTMHFLSLLISWIAQKHQSELADIIGMITELMYPSVHSCILILGNSKLKQTSLCMLRHLRCRLKGENITIAYSNQITSFCVFCVANKSMR.

Residues 1–9 (MNMESVLHN) are Extracellular-facing. Residues 10–30 (FATVLIYVEFIFGNLSNGFIV) form a helical membrane-spanning segment. The Cytoplasmic segment spans residues 31-47 (LSNFLDWVIKQKLSLID). The chain crosses the membrane as a helical span at residues 48–68 (KILLTLAISRITLIWEIYAWF). Over 69 to 85 (KSLYDPSSFLIGIEFQI) the chain is Extracellular. The chain crosses the membrane as a helical span at residues 86–108 (IYFSWVLSSHFSLWLATTLSVFY). Residues 109–129 (LLRIANCSWQIFLYLKWRLKQ) lie on the Cytoplasmic side of the membrane. Residues 130-150 (LIVGMLLGSLVFLLGNLMQSM) form a helical membrane-spanning segment. Over 151–181 (LEERFYQYGRNTSVNTMSNDLAMWTELIFFN) the chain is Extracellular. The N-linked (GlcNAc...) asparagine glycan is linked to asparagine 161. A helical membrane pass occupies residues 182–202 (MAMFSVIPFTLALISFLLLIF). The Cytoplasmic segment spans residues 203 to 231 (SLWKHLQKMQLISRRHRDPSTKAHMNALR). Residues 232–252 (IMVSFLLLYTMHFLSLLISWI) form a helical membrane-spanning segment. The Extracellular segment spans residues 253–262 (AQKHQSELAD). Residues 263-283 (IIGMITELMYPSVHSCILILG) form a helical membrane-spanning segment. Over 284–329 (NSKLKQTSLCMLRHLRCRLKGENITIAYSNQITSFCVFCVANKSMR) the chain is Cytoplasmic.

This sequence belongs to the G-protein coupled receptor T2R family.

It is found in the membrane. In terms of biological role, putative taste receptor which may play a role in the perception of bitterness. The chain is Taste receptor type 2 member 102 from Mus musculus (Mouse).